The sequence spans 395 residues: Flap endonuclease 1 (395 aa).

The interval 1–104 (MGIKHLYQII…GELAKRFMRK (104 aa)) is N-domain. Asp-34 contributes to the Mg(2+) binding site. Residues Arg-47 and Arg-70 each contribute to the DNA site. Mg(2+) contacts are provided by Asp-86, Glu-158, Glu-160, Asp-179, and Asp-181. The I-domain stretch occupies residues 122–253 (EVEKFSRRTV…NTALKLIRDH (132 aa)). Glu-158 contributes to the DNA binding site. Positions 231 and 233 each coordinate DNA. Asp-233 is a Mg(2+) binding site. The interaction with PCNA stretch occupies residues 341–349 (QQSRLEGFF). Basic and acidic residues predominate over residues 360–389 (AVLKRKHEEKLELQKKKKKEDSKAKKEAKS). A disordered region spans residues 360–395 (AVLKRKHEEKLELQKKKKKEDSKAKKEAKSKPRGTT).

Belongs to the XPG/RAD2 endonuclease family. FEN1 subfamily. Interacts with PCNA. Three molecules of FEN1 bind to one PCNA trimer with each molecule binding to one PCNA monomer. PCNA stimulates the nuclease activity without altering cleavage specificity. It depends on Mg(2+) as a cofactor. In terms of processing, phosphorylated. Phosphorylation upon DNA damage induces relocalization to the nuclear plasma.

The protein resides in the nucleus. The protein localises to the nucleolus. It is found in the nucleoplasm. Its subcellular location is the mitochondrion. Functionally, structure-specific nuclease with 5'-flap endonuclease and 5'-3' exonuclease activities involved in DNA replication and repair. During DNA replication, cleaves the 5'-overhanging flap structure that is generated by displacement synthesis when DNA polymerase encounters the 5'-end of a downstream Okazaki fragment. It enters the flap from the 5'-end and then tracks to cleave the flap base, leaving a nick for ligation. Also involved in the long patch base excision repair (LP-BER) pathway, by cleaving within the apurinic/apyrimidinic (AP) site-terminated flap. Acts as a genome stabilization factor that prevents flaps from equilibrating into structures that lead to duplications and deletions. Also possesses 5'-3' exonuclease activity on nicked or gapped double-stranded DNA, and exhibits RNase H activity. Also involved in replication and repair of rDNA and in repairing mitochondrial DNA. The chain is Flap endonuclease 1 from Ajellomyces capsulatus (strain H143) (Darling's disease fungus).